The following is a 396-amino-acid chain: Ornithine aminotransferase 2 (396 aa).

Lysine 255 is modified (N6-(pyridoxal phosphate)lysine).

Belongs to the class-III pyridoxal-phosphate-dependent aminotransferase family. OAT subfamily. Pyridoxal 5'-phosphate serves as cofactor.

It localises to the cytoplasm. It catalyses the reaction a 2-oxocarboxylate + L-ornithine = L-glutamate 5-semialdehyde + an L-alpha-amino acid. It functions in the pathway amino-acid biosynthesis; L-proline biosynthesis; L-glutamate 5-semialdehyde from L-ornithine: step 1/1. Catalyzes the interconversion of ornithine to glutamate semialdehyde. This chain is Ornithine aminotransferase 2, found in Staphylococcus aureus (strain COL).